Consider the following 1083-residue polypeptide: Rho GTPase-activating protein 39 (1083 aa).

Position 2 is an N-acetylserine (serine 2). 2 WW domains span residues 25 to 58 (NTRL…PPAG) and 63 to 97 (RTSE…RPQG). Residues 110–154 (KQNTESPRASAESSPGRGSSVSREGSTSSSLEPEPDTEKAQELPA) form a disordered region. The segment covering 117–141 (RASAESSPGRGSSVSREGSTSSSLE) has biased composition (low complexity). Residue serine 169 is modified to Phosphoserine. Residues 226–369 (AAQGNGYAPD…NKQGPPSPCQ (144 aa)) form a disordered region. The span at 245 to 256 (PSGSQHSPSLQT) shows a compositional bias: polar residues. The segment covering 268–280 (PERRPSPFLKRAE) has biased composition (basic and acidic residues). A phosphoserine mark is found at serine 286, serine 384, serine 388, serine 406, and serine 407. 2 disordered regions span residues 405–545 (GSSP…EAEG) and 570–599 (MKQR…PGPV). Polar residues-rich tracts occupy residues 474–488 (SWSS…TGYS) and 573–582 (RSSWDSQQDG). 4 positions are modified to phosphoserine: serine 604, serine 690, serine 715, and serine 726. A MyTH4 domain is found at 722–879 (WSSESIKKPM…PNVEEIRHAK (158 aa)). A Rho-GAP domain is found at 890–1078 (SALQEVMGMQ…VLIQHLDTSF (189 aa)).

The protein resides in the nucleus. This chain is Rho GTPase-activating protein 39 (ARHGAP39), found in Homo sapiens (Human).